A 514-amino-acid polypeptide reads, in one-letter code: Uronyl 2-sulfotransferase homolog pip (514 aa).

Residues 1–30 (MSLNAERSYKMKLRDVENAFKYRRIPYPKR) lie on the Cytoplasmic side of the membrane. A helical; Signal-anchor for type II membrane protein transmembrane segment spans residues 31 to 50 (SVELIALLAISCTFFLFMHT). Over 51 to 514 (NKLNSRLKEM…EQQNEYNEDY (464 aa)) the chain is Lumenal. The segment covering 112–121 (HDRRSSEEQL) has biased composition (basic and acidic residues). Residues 112–185 (HDRRSSEEQL…DEDEVEENDD (74 aa)) form a disordered region. Over residues 127–140 (HGHHHDHHSHHHHM) the composition is skewed to basic residues. A compositionally biased stretch (basic and acidic residues) spans 155–170 (HDKQLAVPDNKHKEDE). Positions 171 to 185 (VHYEDDEDEVEENDD) are enriched in acidic residues. Asparagine 207 carries N-linked (GlcNAc...) asparagine glycosylation. Histidine 282 is a catalytic residue. Asparagine 287, asparagine 416, asparagine 451, and asparagine 467 each carry an N-linked (GlcNAc...) asparagine glycan.

Belongs to the sulfotransferase 3 family. In terms of assembly, interacts with wbl/windbeutel; the interaction is direct and does not require pip to be folded. Ovary-specific. Specifically expressed in the ventral follicle cells of stage 9-10 egg chambers. In terms of tissue distribution, expressed in ovaries. Specifically expressed in the ventral follicle cells of stage 9-10 egg chambers.

Its subcellular location is the golgi apparatus membrane. Functionally, sulfotransferase involved in dorsoventral axis patterning in early embryos. Required for the ventral activation of ea/easter by the protease snk in the perivitelline space between the embryonic membrane and the eggshell; activation of ea requires both activation of the ndl-gd-snk protease cascade and sulfation of a vitelline membrane component by pip. Probably acts by mediating the sulfation of some glycoprotein or glycosaminoglycan stably deposited in the vitelline membrane, whose ventrally localized modification leads to spatially restricted activation of the protease cascade resulting in localized activation of the spz Toll receptor ligand by ea. In terms of biological role, probably required redundantly with isoform H for dorsoventral axis patterning in embryos. Lacks 2-O-sulfotransferase activity towards completely desulfated N-sulfated (CDSNS) heparin, chondroitin, and chondroitin sulfate A, B (dermatan sulfate), and C. Sulfates several components of the eggshell vitelline membrane, including Vml, Vm26Aa, Vm32E and psd/palisade/Fcp26Aa. Its function is as follows. Probably required redundantly with isoform A for dorsoventral axis patterning in embryos. Lacks 2-O-sulfotransferase activity towards CDSNS heparin, chondroitin, and chondroitin sulfate A, B (dermatan sulfate), and C. This is Uronyl 2-sulfotransferase homolog pip from Drosophila melanogaster (Fruit fly).